A 301-amino-acid polypeptide reads, in one-letter code: ATP synthase gamma chain (301 aa).

Belongs to the ATPase gamma chain family. In terms of assembly, F-type ATPases have 2 components, CF(1) - the catalytic core - and CF(0) - the membrane proton channel. CF(1) has five subunits: alpha(3), beta(3), gamma(1), delta(1), epsilon(1). CF(0) has three main subunits: a, b and c.

The protein localises to the cell inner membrane. Functionally, produces ATP from ADP in the presence of a proton gradient across the membrane. The gamma chain is believed to be important in regulating ATPase activity and the flow of protons through the CF(0) complex. This is ATP synthase gamma chain from Bordetella petrii (strain ATCC BAA-461 / DSM 12804 / CCUG 43448).